The chain runs to 518 residues: Probable pectinesterase/pectinesterase inhibitor 16 (518 aa).

The signal sequence occupies residues 1–33 (MASSSSISNHKIPNTLMFLVIVNFLYLIQTNSA). Residues 30 to 172 (TNSAVSISSN…TGLLTSSLDL (143 aa)) are pectinesterase inhibitor 16. N-linked (GlcNAc...) asparagine glycans are attached at residues Asn82 and Asn161. The pectinesterase 16 stretch occupies residues 213 to 502 (DAVVAPDGSG…FTVASFIDGN (290 aa)). Substrate-binding residues include Thr289 and Gln319. Asp342 functions as the Proton donor; for pectinesterase activity in the catalytic mechanism. Residue Asp363 is the Nucleophile; for pectinesterase activity of the active site. Residues Arg422 and Trp424 each contribute to the substrate site.

In the N-terminal section; belongs to the PMEI family. The protein in the C-terminal section; belongs to the pectinesterase family. As to expression, expressed in siliques and floral stems.

The protein resides in the secreted. Its subcellular location is the cell wall. It catalyses the reaction [(1-&gt;4)-alpha-D-galacturonosyl methyl ester](n) + n H2O = [(1-&gt;4)-alpha-D-galacturonosyl](n) + n methanol + n H(+). The protein operates within glycan metabolism; pectin degradation; 2-dehydro-3-deoxy-D-gluconate from pectin: step 1/5. Functionally, acts in the modification of cell walls via demethylesterification of cell wall pectin. This Arabidopsis thaliana (Mouse-ear cress) protein is Probable pectinesterase/pectinesterase inhibitor 16 (PME16).